The sequence spans 97 residues: Citrate lyase acyl carrier protein 2 (97 aa).

O-(phosphoribosyl dephospho-coenzyme A)serine is present on serine 14.

It belongs to the CitD family. As to quaternary structure, oligomer with a subunit composition of (alpha,beta,gamma)6.

It is found in the cytoplasm. In terms of biological role, covalent carrier of the coenzyme of citrate lyase. The polypeptide is Citrate lyase acyl carrier protein 2 (Salmonella paratyphi A (strain ATCC 9150 / SARB42)).